The following is a 191-amino-acid chain: Protein RER1 homolog (191 aa).

Helical transmembrane passes span 35–55 (AFRW…IILL), 57–77 (GFYI…LLFL), and 135–155 (FFDV…LTFL).

The protein belongs to the RER1 family.

The protein localises to the membrane. Functionally, may be involved in protein transport along the secretory pathway. The chain is Protein RER1 homolog (rer-1) from Caenorhabditis elegans.